The primary structure comprises 1941 residues: Myosin-2 (1941 aa).

The 50-residue stretch at 33 to 82 (DAKTSVFVAEPKESFVKGTIQSREGGKVTVKTEGGATLTVKDDQVFPMNP) folds into the Myosin N-terminal SH3-like domain. Residues Thr-64 and Thr-69 each carry the phosphothreonine modification. A Myosin motor domain is found at 86-784 (DKIEDMAMMT…LLGLLEEMRD (699 aa)). Lys-130 carries the N6,N6,N6-trimethyllysine modification. Position 179–186 (179–186 (GESGAGKT)) interacts with ATP. At Tyr-389 the chain carries Phosphotyrosine. The residue at position 392 (Ser-392) is a Phosphoserine. Thr-419 carries the phosphothreonine modification. Ser-625 is modified (phosphoserine). The segment at 661–683 (LNKLMTNLRSTHPHFVRCIIPNE) is actin-binding. The residue at position 759 (His-759) is a Pros-methylhistidine. The segment at 763 to 777 (KFGHTKVFFKAGLLG) is actin-binding. Positions 787-816 (LAQLITRTQARCRGFLARVEYQRMVERREA) constitute an IQ domain. A coiled-coil region spans residues 845–1941 (LLKSAETEKE…EVHTKVISEE (1097 aa)). A phosphoserine mark is found at Ser-1094 and Ser-1098. Disordered regions lie at residues 1128–1149 (IEAE…SREL) and 1155–1174 (RLEE…KKRE). The span at 1130 to 1149 (AERASRAKAEKQRSDLSREL) shows a compositional bias: basic and acidic residues. Phosphoserine is present on residues Ser-1164 and Ser-1239. A Phosphothreonine modification is found at Thr-1243. Ser-1245 carries the phosphoserine modification. Thr-1257 carries the phosphothreonine modification. Ser-1263 bears the Phosphoserine mark. Thr-1288 is subject to Phosphothreonine. 4 positions are modified to phosphoserine: Ser-1290, Ser-1294, Ser-1305, and Ser-1308. A Phosphothreonine modification is found at Thr-1469. Position 1476 is a phosphoserine (Ser-1476). Tyr-1494 is subject to Phosphotyrosine. Residue Ser-1497 is modified to Phosphoserine. The residue at position 1503 (Thr-1503) is a Phosphothreonine. Ser-1516 carries the post-translational modification Phosphoserine. Phosphothreonine is present on Thr-1519. Residues Ser-1556, Ser-1576, Ser-1602, Ser-1605, Ser-1716, and Ser-1728 each carry the phosphoserine modification. Thr-1732 and Thr-1738 each carry phosphothreonine. Ser-1741 carries the phosphoserine modification.

The protein belongs to the TRAFAC class myosin-kinesin ATPase superfamily. Myosin family. Muscle myosin is a hexameric protein that consists of 2 heavy chain subunits (MHC), 2 alkali light chain subunits (MLC) and 2 regulatory light chain subunits (MLC-2). Interacts with GCSAM.

It localises to the cytoplasm. It is found in the myofibril. Its function is as follows. Myosins are actin-based motor molecules with ATPase activity essential for muscle contraction. The protein is Myosin-2 of Homo sapiens (Human).